Here is a 382-residue protein sequence, read N- to C-terminus: MEAVERVNLLGLDGAALSELVGQWGGKPFRARQLQRWVHQRGADSFDAMTDLARDFRAQLARDCVIEALPVNTEQRSSDGTRKWLFDVGQGNAIETVFIPEDDRGTLCISSQAGCVVNCRFCSTGHQGFNRNLRASEIIGQLWWAKRVLEAAADTARLPGGKAGEDTRVISNVVMMGMGEPLLNYDQVLPALRLMLDDNAYGLSRRRVTVSTSGVVPMMDRLSQDCPVALAVSLHAPNDALRDELVPLNKKYPLNALLAACERYLAHAPRDFITFEYCMLDGINDTDQHARELIQLARQVRCKLNLIPFNPFPASGLKRSPSARVRVFAQRLMDAGIVTTVRKTRGDDIDAACGQLAGEVRDRTRITERNATRTIPIQQVHA.

Glu95 serves as the catalytic Proton acceptor. The Radical SAM core domain occupies 101–348 (EDDRGTLCIS…TTVRKTRGDD (248 aa)). Cys108 and Cys353 are joined by a disulfide. Cys115, Cys119, and Cys122 together coordinate [4Fe-4S] cluster. Residues 179–180 (GE), Ser211, 233–235 (SLH), and Asn310 contribute to the S-adenosyl-L-methionine site. The active-site S-methylcysteine intermediate is Cys353.

The protein belongs to the radical SAM superfamily. RlmN family. Requires [4Fe-4S] cluster as cofactor.

The protein resides in the cytoplasm. The enzyme catalyses adenosine(2503) in 23S rRNA + 2 reduced [2Fe-2S]-[ferredoxin] + 2 S-adenosyl-L-methionine = 2-methyladenosine(2503) in 23S rRNA + 5'-deoxyadenosine + L-methionine + 2 oxidized [2Fe-2S]-[ferredoxin] + S-adenosyl-L-homocysteine. It catalyses the reaction adenosine(37) in tRNA + 2 reduced [2Fe-2S]-[ferredoxin] + 2 S-adenosyl-L-methionine = 2-methyladenosine(37) in tRNA + 5'-deoxyadenosine + L-methionine + 2 oxidized [2Fe-2S]-[ferredoxin] + S-adenosyl-L-homocysteine. In terms of biological role, specifically methylates position 2 of adenine 2503 in 23S rRNA and position 2 of adenine 37 in tRNAs. m2A2503 modification seems to play a crucial role in the proofreading step occurring at the peptidyl transferase center and thus would serve to optimize ribosomal fidelity. This is Dual-specificity RNA methyltransferase RlmN from Bordetella pertussis (strain Tohama I / ATCC BAA-589 / NCTC 13251).